A 2510-amino-acid chain; its full sequence is Highly reducing polyketide synthase g433 (2510 aa).

The tract at residues 1 to 54 (MAPGRTDVTVAENGNGLHTAHNGVSNGTSNGTNGTSHTSNGTNSSAKTTSNGVH) is disordered. Over residues 22–45 (NGVSNGTSNGTNGTSHTSNGTNSS) the composition is skewed to low complexity. The region spanning 58-477 (DIPIAIVGMG…GANAHAVIDS (420 aa)) is the Ketosynthase family 3 (KS3) domain. Active-site for beta-ketoacyl synthase activity residues include cysteine 229, histidine 365, and histidine 400. The segment at 574–880 (FVFTGQGAQW…VPTLVRGQND (307 aa)) is malonyl-CoA:ACP transacylase (MAT) domain. The tract at residues 942–1070 (HDLLGCQVFE…GQVKAGRADS (129 aa)) is N-terminal hotdog fold. The dehydratase (DH) domain stretch occupies residues 942–1226 (HDLLGCQVFE…NLRLAPAADD (285 aa)). A PKS/mFAS DH domain is found at 942–1229 (HDLLGCQVFE…LAPAADDTGG (288 aa)). The active-site Proton acceptor; for dehydratase activity is histidine 974. The tract at residues 1083 to 1229 (PRKVSSTRWY…LAPAADDTGG (147 aa)) is C-terminal hotdog fold. The Proton donor; for dehydratase activity role is filled by aspartate 1144. The methyltransferase (CMet) domain stretch occupies residues 1395–1574 (DFLGLVSHDK…FDGAEAVIYD (180 aa)). Residues 1787-2097 (GSLKTLRWVQ…KGQHMGKLVI (311 aa)) are enoyl reductase (ER) (ER) domain. A ketoreductase (KR) domain region spans residues 2122-2296 (SYLLVGGLGG…ASVLDISIIE (175 aa)). In terms of domain architecture, Carrier spans 2419 to 2496 (SSVSFLANEI…KLGEAAAEGL (78 aa)). Position 2456 is an O-(pantetheine 4'-phosphoryl)serine (serine 2456).

It functions in the pathway mycotoxin biosynthesis. Highly reducing polyketide synthase; part of the gene cluster that mediates the biosynthesis of 1233A, a natural compound known as an inhibitor of HMG-CoA synthase in the mevalonate pathway and with antibacterial and antifungal activities. The highly reducing polyketide synthase g433 gene is responsible for the 1233A backbone biosynthesis and the cytochrome P450 monooxygenase g430 catalyzes oxidation of the backbone. This chain is Highly reducing polyketide synthase g433, found in Fusarium sp.